We begin with the raw amino-acid sequence, 527 residues long: Organic cation/carnitine transporter 2 (527 aa).

Over 1–27 (MAEPTQPLLTDSNSSSPRSLDDTIESY) the chain is Cytoplasmic. Residues 28 to 48 (IGSFGWAQFLQAALVSFSGVF) traverse the membrane as a helical segment. At 49-119 (DAQQTFISVF…SFVKGLPESS (71 aa)) the chain is on the extracellular side. The chain crosses the membrane as a helical span at residues 120–140 (FFVGCLIGGLVLSTLADSSLG). Over 141–149 (RKNMLFLSC) the chain is Cytoplasmic. Residues 150-170 (LVMAISTMLTVFSPNIWVYAV) traverse the membrane as a helical segment. The Extracellular segment spans residues 171 to 176 (LRFVNG). The chain crosses the membrane as a helical span at residues 177 to 195 (FGRATIGTCALVLSTELVG). Position 190–197 (190–197 (STELVGKK)) interacts with ATP. Topologically, residues 196–201 (KKWRGR) are cytoplasmic. The helical transmembrane segment at 202–222 (VGIMSFFGFMLGFLSLPLMAY) threads the bilayer. Topologically, residues 223-230 (MNRGSSWR) are extracellular. A helical membrane pass occupies residues 231–251 (ILYAWTSIPTIIYCVLVRFFV). The Cytoplasmic segment spans residues 252–326 (CESPRWLFVR…LVEKRWALKR (75 aa)). Residues 327 to 347 (LSAVMAIAFGIGLVYYGMPLA) form a helical membrane-spanning segment. Topologically, residues 348–356 (LSNLDFNIY) are extracellular. A helical membrane pass occupies residues 357–377 (LSAAFNALMDLPANLITLFLV). Residues 378–385 (DKLSRRNA) lie on the Cytoplasmic side of the membrane. Residues 386-406 (LIGFTALGGVSSVLIFALHNM) form a helical membrane-spanning segment. At 407–415 (RIGNHGALQ) the chain is on the extracellular side. A helical transmembrane segment spans residues 416-436 (LALELISYFSACSAFNMEMIY). The Cytoplasmic segment spans residues 437–448 (TIELFPTCVRNS). A helical transmembrane segment spans residues 449–469 (AIAMARQALVLGGVFSPIMVA). At 470–475 (AGRKNA) the chain is on the extracellular side. Residues 476 to 496 (FWSFGLFGLAIGLLGLFAVGL) traverse the membrane as a helical segment. Over 497 to 527 (PETRGSDLCDTMDEEECKDRRSKVAVNNVIA) the chain is Cytoplasmic.

It belongs to the major facilitator (TC 2.A.1) superfamily. Organic cation transporter (TC 2.A.1.19) family. As to expression, weakly expressed in roots, including tips and initiation site of lateral roots, siliques and flowers, especially in pollen and stigma.

The protein localises to the vacuole membrane. High affinity carnitine transporter involved in the active cellular uptake of carnitine. Also transports organic cations. The sequence is that of Organic cation/carnitine transporter 2 (OCT2) from Arabidopsis thaliana (Mouse-ear cress).